Here is a 1043-residue protein sequence, read N- to C-terminus: RNA cytidine acetyltransferase (1043 aa).

ATP-binding positions include 285-294 and R462; that span reads GRGKSAAVGL. One can recognise an N-acetyltransferase domain in the interval 551–736; sequence VLMAPIDKSR…VPVYIRQNSN (186 aa). Residues 622-624, 629-635, and R723 contribute to the acetyl-CoA site; these read VAV and QSMGYGG. Positions 1020 to 1043 are disordered; sequence IPDAKDPANKNAKKKKRFSSGGRR. The segment covering 1030-1043 has biased composition (basic residues); the sequence is NAKKKKRFSSGGRR.

It belongs to the RNA cytidine acetyltransferase family. NAT10 subfamily. Part of the small subunit (SSU) processome, composed of more than 70 proteins and the RNA chaperone small nucleolar RNA (snoRNA) U3.

Its subcellular location is the nucleus. The protein resides in the nucleolus. The catalysed reaction is a cytidine in 18S rRNA + acetyl-CoA + ATP + H2O = an N(4)-acetylcytidine in 18S rRNA + ADP + phosphate + CoA + H(+). It carries out the reaction a cytidine in tRNA + acetyl-CoA + ATP + H2O = an N(4)-acetylcytidine in tRNA + ADP + phosphate + CoA + H(+). In terms of biological role, RNA cytidine acetyltransferase with specificity toward both 18S rRNA and tRNAs. Catalyzes the formation of N(4)-acetylcytidine (ac4C) in 18S rRNA. Required for early nucleolar cleavages of precursor rRNA at sites A0, A1 and A2 during 18S rRNA synthesis. Catalyzes the formation of ac4C in serine and leucine tRNAs. Requires a tRNA-binding adapter protein for full tRNA acetyltransferase activity but not for 18S rRNA acetylation. Part of the small subunit (SSU) processome, first precursor of the small eukaryotic ribosomal subunit. During the assembly of the SSU processome in the nucleolus, many ribosome biogenesis factors, an RNA chaperone and ribosomal proteins associate with the nascent pre-rRNA and work in concert to generate RNA folding, modifications, rearrangements and cleavage as well as targeted degradation of pre-ribosomal RNA by the RNA exosome. The chain is RNA cytidine acetyltransferase from Caenorhabditis elegans.